The primary structure comprises 170 residues: Peptide methionine sulfoxide reductase MsrA (170 aa).

Cys14 is a catalytic residue.

Belongs to the MsrA Met sulfoxide reductase family.

It catalyses the reaction L-methionyl-[protein] + [thioredoxin]-disulfide + H2O = L-methionyl-(S)-S-oxide-[protein] + [thioredoxin]-dithiol. The catalysed reaction is [thioredoxin]-disulfide + L-methionine + H2O = L-methionine (S)-S-oxide + [thioredoxin]-dithiol. Its function is as follows. Has an important function as a repair enzyme for proteins that have been inactivated by oxidation. Catalyzes the reversible oxidation-reduction of methionine sulfoxide in proteins to methionine. This chain is Peptide methionine sulfoxide reductase MsrA, found in Streptomyces avermitilis (strain ATCC 31267 / DSM 46492 / JCM 5070 / NBRC 14893 / NCIMB 12804 / NRRL 8165 / MA-4680).